The chain runs to 313 residues: MRILLANPRGFCAGVERAINIVEKVIAIYGPPIYVRHELVHNSYVVNTLRNQGVVFIEQIHEVPDGAVIIFSAHGVSKAIRKEVQSRNLTIFDATCPLVTKVHMEVARASHKGIETILIGHYGHPEVEGTIGQYNNTDGGIYLVESLEDVWQLKVKNKNNLCFITQTTFSVDKSSAIIDALRQRFPFIKGPHKQDICYATTNRQEAVRNLTMATDIVLVVGSKNSSNSNRLVELAQQTGKPAYLIDCASDIKENWLQGINIIGVTAGASAPNILVLQVILKLQSFGAESAEELRGYEEKMIFDLPRNLHVVNK.

Cysteine 12 provides a ligand contact to [4Fe-4S] cluster. Residues histidine 41 and histidine 74 each coordinate (2E)-4-hydroxy-3-methylbut-2-enyl diphosphate. Dimethylallyl diphosphate contacts are provided by histidine 41 and histidine 74. The isopentenyl diphosphate site is built by histidine 41 and histidine 74. [4Fe-4S] cluster is bound at residue cysteine 96. Histidine 124 provides a ligand contact to (2E)-4-hydroxy-3-methylbut-2-enyl diphosphate. Histidine 124 is a binding site for dimethylallyl diphosphate. Histidine 124 lines the isopentenyl diphosphate pocket. Glutamate 126 functions as the Proton donor in the catalytic mechanism. A (2E)-4-hydroxy-3-methylbut-2-enyl diphosphate-binding site is contributed by threonine 167. [4Fe-4S] cluster is bound at residue cysteine 197. (2E)-4-hydroxy-3-methylbut-2-enyl diphosphate-binding residues include serine 225, serine 226, asparagine 227, and serine 269. Residues serine 225, serine 226, asparagine 227, and serine 269 each coordinate dimethylallyl diphosphate. 4 residues coordinate isopentenyl diphosphate: serine 225, serine 226, asparagine 227, and serine 269.

It belongs to the IspH family. [4Fe-4S] cluster serves as cofactor.

The enzyme catalyses isopentenyl diphosphate + 2 oxidized [2Fe-2S]-[ferredoxin] + H2O = (2E)-4-hydroxy-3-methylbut-2-enyl diphosphate + 2 reduced [2Fe-2S]-[ferredoxin] + 2 H(+). It carries out the reaction dimethylallyl diphosphate + 2 oxidized [2Fe-2S]-[ferredoxin] + H2O = (2E)-4-hydroxy-3-methylbut-2-enyl diphosphate + 2 reduced [2Fe-2S]-[ferredoxin] + 2 H(+). It participates in isoprenoid biosynthesis; dimethylallyl diphosphate biosynthesis; dimethylallyl diphosphate from (2E)-4-hydroxy-3-methylbutenyl diphosphate: step 1/1. It functions in the pathway isoprenoid biosynthesis; isopentenyl diphosphate biosynthesis via DXP pathway; isopentenyl diphosphate from 1-deoxy-D-xylulose 5-phosphate: step 6/6. Its function is as follows. Catalyzes the conversion of 1-hydroxy-2-methyl-2-(E)-butenyl 4-diphosphate (HMBPP) into a mixture of isopentenyl diphosphate (IPP) and dimethylallyl diphosphate (DMAPP). Acts in the terminal step of the DOXP/MEP pathway for isoprenoid precursor biosynthesis. The chain is 4-hydroxy-3-methylbut-2-enyl diphosphate reductase from Baumannia cicadellinicola subsp. Homalodisca coagulata.